We begin with the raw amino-acid sequence, 312 residues long: Nucleosome assembly protein 1-like 4 (312 aa).

A coiled-coil region spans residues 24 to 78; the sequence is VETLKNKLQALAEQHVDVLESLAPSVRKRVDVLMEIQSQHDELEVKFFEEKAALE. Residues 45 to 60 carry the Nuclear export signal motif; it reads LAPSVRKRVDVLMEIQ. The interval 288-312 is disordered; it reads EDYGASWVDDEEEDDNDDEYSDEEA.

The protein belongs to the nucleosome assembly protein (NAP) family.

It localises to the nucleus. Its subcellular location is the cytoplasm. May modulate chromatin structure by regulation of nucleosome assembly/disassembly. This chain is Nucleosome assembly protein 1-like 4, found in Oryza sativa subsp. indica (Rice).